The sequence spans 232 residues: 2-C-methyl-D-erythritol 4-phosphate cytidylyltransferase (232 aa).

It belongs to the IspD/TarI cytidylyltransferase family. IspD subfamily.

The catalysed reaction is 2-C-methyl-D-erythritol 4-phosphate + CTP + H(+) = 4-CDP-2-C-methyl-D-erythritol + diphosphate. Its pathway is isoprenoid biosynthesis; isopentenyl diphosphate biosynthesis via DXP pathway; isopentenyl diphosphate from 1-deoxy-D-xylulose 5-phosphate: step 2/6. Catalyzes the formation of 4-diphosphocytidyl-2-C-methyl-D-erythritol from CTP and 2-C-methyl-D-erythritol 4-phosphate (MEP). The sequence is that of 2-C-methyl-D-erythritol 4-phosphate cytidylyltransferase from Shewanella frigidimarina (strain NCIMB 400).